Reading from the N-terminus, the 394-residue chain is NAD(P)H-quinone oxidoreductase subunit H (394 aa).

It belongs to the complex I 49 kDa subunit family. In terms of assembly, NDH-1 can be composed of about 15 different subunits; different subcomplexes with different compositions have been identified which probably have different functions.

Its subcellular location is the cellular thylakoid membrane. It catalyses the reaction a plastoquinone + NADH + (n+1) H(+)(in) = a plastoquinol + NAD(+) + n H(+)(out). The catalysed reaction is a plastoquinone + NADPH + (n+1) H(+)(in) = a plastoquinol + NADP(+) + n H(+)(out). In terms of biological role, NDH-1 shuttles electrons from an unknown electron donor, via FMN and iron-sulfur (Fe-S) centers, to quinones in the respiratory and/or the photosynthetic chain. The immediate electron acceptor for the enzyme in this species is believed to be plastoquinone. Couples the redox reaction to proton translocation, and thus conserves the redox energy in a proton gradient. Cyanobacterial NDH-1 also plays a role in inorganic carbon-concentration. This Synechococcus sp. (strain ATCC 27144 / PCC 6301 / SAUG 1402/1) (Anacystis nidulans) protein is NAD(P)H-quinone oxidoreductase subunit H.